The chain runs to 545 residues: CTP synthase (545 aa).

The interval 1-265 (MTKYIFITGG…DEIVVKKLSL (265 aa)) is amidoligase domain. Residue S13 participates in CTP binding. S13 contributes to the UTP binding site. Residues 14-19 (SLGKGI) and D71 contribute to the ATP site. Residues D71 and E139 each contribute to the Mg(2+) site. CTP-binding positions include 146-148 (DIE), 186-191 (KTKPTQ), and K222. UTP is bound by residues 186 to 191 (KTKPTQ) and K222. Positions 290–541 (KIAMVGKYTE…VLAARIHHQE (252 aa)) constitute a Glutamine amidotransferase type-1 domain. L-glutamine is bound at residue G351. C378 acts as the Nucleophile; for glutamine hydrolysis in catalysis. L-glutamine-binding positions include 379-382 (LGMQ), E402, and R469. Catalysis depends on residues H514 and E516.

The protein belongs to the CTP synthase family. In terms of assembly, homotetramer.

The catalysed reaction is UTP + L-glutamine + ATP + H2O = CTP + L-glutamate + ADP + phosphate + 2 H(+). It catalyses the reaction L-glutamine + H2O = L-glutamate + NH4(+). The enzyme catalyses UTP + NH4(+) + ATP = CTP + ADP + phosphate + 2 H(+). Its pathway is pyrimidine metabolism; CTP biosynthesis via de novo pathway; CTP from UDP: step 2/2. Its activity is regulated as follows. Allosterically activated by GTP, when glutamine is the substrate; GTP has no effect on the reaction when ammonia is the substrate. The allosteric effector GTP functions by stabilizing the protein conformation that binds the tetrahedral intermediate(s) formed during glutamine hydrolysis. Inhibited by the product CTP, via allosteric rather than competitive inhibition. In terms of biological role, catalyzes the ATP-dependent amination of UTP to CTP with either L-glutamine or ammonia as the source of nitrogen. Regulates intracellular CTP levels through interactions with the four ribonucleotide triphosphates. This is CTP synthase from Legionella pneumophila (strain Corby).